We begin with the raw amino-acid sequence, 371 residues long: Cyanide hydratase (371 aa).

The region spanning 6–285 is the CN hydrolase domain; the sequence is YKAAAVTSEP…DGLLYVDIDL (280 aa). The Proton acceptor role is filled by Glu-46. Residue Lys-128 is part of the active site. The Nucleophile role is filled by Cys-163. The span at 339–353 shows a compositional bias: basic and acidic residues; the sequence is GLNRPLDPPKDERHG. Residues 339-371 are disordered; sequence GLNRPLDPPKDERHGIVGVAGQKSAEQRKAGDL.

The protein belongs to the carbon-nitrogen hydrolase superfamily. Nitrilase family. Oligomer of dimers, forming left-handed helical fibers.

The catalysed reaction is formamide = hydrogen cyanide + H2O. Functionally, catalyzes the hydration of cyanide to formamide. Degradation of cyanide may be important for plant pathogenic fungi in infection of cyanogenic plants. Also acts on 2-cyanopyridine, fumaronitrile and benzonitrile, albeit at a lower rate. In Stereum hirsutum (strain FP-91666) (White-rot fungus), this protein is Cyanide hydratase (nit).